Here is a 106-residue protein sequence, read N- to C-terminus: UPF0060 membrane protein CHU_3331 (106 aa).

Transmembrane regions (helical) follow at residues 5 to 25 (FYFILAAFCEISGCYLFWLHF), 31 to 51 (ALLLLPAAACLLVFAYLLTKI), 59 to 79 (AYAVYGGIYIVCSLAWMYGIE), and 85 to 105 (IWDYIGVGICLIGASVILFAP).

Belongs to the UPF0060 family.

It localises to the cell inner membrane. This is UPF0060 membrane protein CHU_3331 from Cytophaga hutchinsonii (strain ATCC 33406 / DSM 1761 / CIP 103989 / NBRC 15051 / NCIMB 9469 / D465).